Here is a 70-residue protein sequence, read N- to C-terminus: Spore germination protein-like protein YpzD (70 aa).

It belongs to the GerPA/GerPF family.

The chain is Spore germination protein-like protein YpzD (ypzD) from Bacillus subtilis (strain 168).